A 1031-amino-acid polypeptide reads, in one-letter code: Caprin-2 (1031 aa).

Disordered stretches follow at residues 1–27 (MKSA…QSTL), 364–458 (LQEE…SWEN), 500–520 (PKDV…LPKD), 605–658 (DQAS…SSEA), and 830–876 (RSGT…SMTP). Polar residues-rich tracts occupy residues 425-439 (VSVQ…SWTT) and 446-458 (ASVQ…SWEN). Over residues 608-646 (SSGSETEFTTSETPEMVVSPCKPKPASALASPNPPLSKS) the composition is skewed to low complexity. Positions 830-853 (RSGTSSGLQANSRAGWSDSSQVSS) are enriched in polar residues. Phosphoserine occurs at positions 852 and 853. The C1q domain occupies 897 to 1031 (PQQMRVAFSA…TFSGYLLYQD (135 aa)). The Ca(2+) site is built by Asp982 and Glu988.

Belongs to the caprin family. In terms of assembly, homotrimer; via C1q domain. Found in a complex with LRP6, CCNY and CDK14 during G2/M stage; CAPRIN2 functions as a scaffold for the complex by binding to CCNY via its N terminus and to CDK14 via its C terminus. Interacts with LRP5. Interacts with LRP6. In terms of tissue distribution, specifically expressed in brain (at protein level).

The protein resides in the cytoplasm. It localises to the cell membrane. In terms of biological role, promotes phosphorylation of the Wnt coreceptor LRP6, leading to increased activity of the canonical Wnt signaling pathway. Facilitates constitutive LRP6 phosphorylation by CDK14/CCNY during G2/M stage of the cell cycle, which may potentiate cells for Wnt signaling. May regulate the transport and translation of mRNAs, modulating for instance the expression of proteins involved in synaptic plasticity in neurons. Involved in regulation of growth as erythroblasts shift from a highly proliferative state towards their terminal phase of differentiation. May be involved in apoptosis. The chain is Caprin-2 from Mus musculus (Mouse).